Here is a 635-residue protein sequence, read N- to C-terminus: BTB/POZ domain-containing protein SETH6 (635 aa).

Residues serine 39–serine 104 form the BTB domain. The 289-residue stretch at aspartate 206–arginine 494 folds into the NPH3 domain. Phosphotyrosine is present on tyrosine 435. The segment at glutamine 604 to serine 635 is disordered. A compositionally biased stretch (basic and acidic residues) spans lysine 612–phenylalanine 624. Over residues methionine 625 to serine 635 the composition is skewed to basic residues.

The protein belongs to the NPH3 family.

It participates in protein modification; protein ubiquitination. In terms of biological role, may act as a substrate-specific adapter of an E3 ubiquitin-protein ligase complex (CUL3-RBX1-BTB) which mediates the ubiquitination and subsequent proteasomal degradation of target proteins. This is BTB/POZ domain-containing protein SETH6 (SETH6) from Arabidopsis thaliana (Mouse-ear cress).